The following is a 508-amino-acid chain: MGLPWYRVHTVVLNDPGRLLAVHIMHTALVSGWAGSMALYELAVFDPSDPVLDPMWRQGMFVIPFMTRLGITDSWGGWSISGGTVTNPGIWSYEGVAGTHIVFSGLCFLAAIWHWVYWDLAIFSDDRTGKPSLDLPKIFGIHLFLAGVACFGFGAFHVTGLYGPGIWVSDPYGLTGKVQAVNPAWGAEGFDPFVPGGIASHHIAAGTLGILAGLFHLSVRPPQRLYKGLRMGNIETVLSSSIAAVFFAAFVVAGTMWYGSATTPIELFGPTRYQWDQGYFQQEIYRRVSNGLSENLSLSEAWSKIPEKLAFYDYIGNNPAKGGLFRAGSMDNGDGIAVGWLGHPVFRDKEGRELFVRRMPTFFETFPVVLVDEEGIVRADVPFRRAESKYSVEQVGVTVEFYGGELNGVSYSDPATVKKYARRSQLGEIFELDRATLKSDGVFRSSPRGWFTFGHATFALLFFFGHIWHGARTLFRDVFAGIDPDLDAQVEFGTFQKVGDPTTRKQAV.

6 helical membrane-spanning segments follow: residues 21 to 36, 101 to 115, 140 to 156, 203 to 218, 237 to 252, and 457 to 472; these read AVHI…WAGS, IVFS…IWHW, GIHL…FGAF, IAAG…FHLS, VLSS…AFVV, and TFAL…HGAR.

Belongs to the PsbB/PsbC family. PsbB subfamily. As to quaternary structure, PSII is composed of 1 copy each of membrane proteins PsbA, PsbB, PsbC, PsbD, PsbE, PsbF, PsbH, PsbI, PsbJ, PsbK, PsbL, PsbM, PsbT, PsbX, PsbY, PsbZ, Psb30/Ycf12, at least 3 peripheral proteins of the oxygen-evolving complex and a large number of cofactors. It forms dimeric complexes. Binds multiple chlorophylls. PSII binds additional chlorophylls, carotenoids and specific lipids. is required as a cofactor.

It localises to the plastid. The protein localises to the chloroplast thylakoid membrane. Functionally, one of the components of the core complex of photosystem II (PSII). It binds chlorophyll and helps catalyze the primary light-induced photochemical processes of PSII. PSII is a light-driven water:plastoquinone oxidoreductase, using light energy to abstract electrons from H(2)O, generating O(2) and a proton gradient subsequently used for ATP formation. The sequence is that of Photosystem II CP47 reaction center protein from Brachypodium distachyon (Purple false brome).